The chain runs to 421 residues: Gamma-glutamyl phosphate reductase (421 aa).

This sequence belongs to the gamma-glutamyl phosphate reductase family.

The protein localises to the cytoplasm. The enzyme catalyses L-glutamate 5-semialdehyde + phosphate + NADP(+) = L-glutamyl 5-phosphate + NADPH + H(+). Its pathway is amino-acid biosynthesis; L-proline biosynthesis; L-glutamate 5-semialdehyde from L-glutamate: step 2/2. Functionally, catalyzes the NADPH-dependent reduction of L-glutamate 5-phosphate into L-glutamate 5-semialdehyde and phosphate. The product spontaneously undergoes cyclization to form 1-pyrroline-5-carboxylate. In Nitrosospira multiformis (strain ATCC 25196 / NCIMB 11849 / C 71), this protein is Gamma-glutamyl phosphate reductase.